The chain runs to 418 residues: ATP phosphoribosyltransferase regulatory subunit (418 aa).

Belongs to the class-II aminoacyl-tRNA synthetase family. HisZ subfamily. Heteromultimer composed of HisG and HisZ subunits.

The protein localises to the cytoplasm. Its pathway is amino-acid biosynthesis; L-histidine biosynthesis; L-histidine from 5-phospho-alpha-D-ribose 1-diphosphate: step 1/9. Required for the first step of histidine biosynthesis. May allow the feedback regulation of ATP phosphoribosyltransferase activity by histidine. In Halothermothrix orenii (strain H 168 / OCM 544 / DSM 9562), this protein is ATP phosphoribosyltransferase regulatory subunit.